The following is a 216-amino-acid chain: uncharacterized protein (216 aa).

The chain crosses the membrane as a helical span at residues 5-22 (LGLVFGSVILIYLISLFL).

It is found in the membrane. This is an uncharacterized protein from Aquifex aeolicus (strain VF5).